The following is a 314-amino-acid chain: Ornithine carbamoyltransferase (314 aa).

Carbamoyl phosphate-binding positions include 61 to 64, Gln-88, Arg-112, and 139 to 142; these read STRT and HPCQ. Residues Asn-170, Asp-234, and 238–239 each bind L-ornithine; that span reads SM. Carbamoyl phosphate-binding positions include 274–275 and Arg-302; that span reads CL.

The protein belongs to the aspartate/ornithine carbamoyltransferase superfamily. OTCase family.

It localises to the cytoplasm. It carries out the reaction carbamoyl phosphate + L-ornithine = L-citrulline + phosphate + H(+). The protein operates within amino-acid biosynthesis; L-arginine biosynthesis; L-arginine from L-ornithine and carbamoyl phosphate: step 1/3. Functionally, reversibly catalyzes the transfer of the carbamoyl group from carbamoyl phosphate (CP) to the N(epsilon) atom of ornithine (ORN) to produce L-citrulline. The polypeptide is Ornithine carbamoyltransferase (Anoxybacillus flavithermus (strain DSM 21510 / WK1)).